We begin with the raw amino-acid sequence, 159 residues long: Phospholipase A2 AP-PLA2-I (159 aa).

An N-terminal signal peptide occupies residues 1-19; that stretch reads MNFLVVIVTTVSLAGAASA. The propeptide occupies 20 to 23; sequence GEIQ. Intrachain disulfides connect cysteine 51–cysteine 159, cysteine 53–cysteine 69, cysteine 68–cysteine 139, cysteine 75–cysteine 132, cysteine 85–cysteine 125, and cysteine 110–cysteine 130. Tyrosine 52, glycine 54, and glycine 56 together coordinate Ca(2+). Residue histidine 72 is part of the active site. Aspartate 73 is a binding site for Ca(2+). Aspartate 133 is an active-site residue.

It belongs to the phospholipase A2 family. Group I subfamily. As to quaternary structure, homodimer. Requires Ca(2+) as cofactor. As to expression, expressed by the venom gland.

It localises to the secreted. It catalyses the reaction a 1,2-diacyl-sn-glycero-3-phosphocholine + H2O = a 1-acyl-sn-glycero-3-phosphocholine + a fatty acid + H(+). Functionally, starfish phospholipase A2 (PLA2) that has hemorrhagic and capillary permeability-increasing activities and hence is considered to be deeply involved in the local inflammation. Shows hemolytic activity only in the presence of phosphatidylcholine (PC). PLA2 catalyzes the calcium-dependent hydrolysis of the 2-acyl groups in 3-sn-phosphoglycerides. This chain is Phospholipase A2 AP-PLA2-I, found in Acanthaster planci (Crown-of-thorns starfish).